The primary structure comprises 834 residues: Protein SEY1 (834 aa).

Residues 1 to 26 form a disordered region; the sequence is MSNVPSPTVTLEGDSPDAAHEAVSSS. The Cytoplasmic segment spans residues 1-733; sequence MSNVPSPTVT…KRSIMQHVTQ (733 aa). The GB1/RHD3-type G domain maps to 63-296; the sequence is PGDYRIISVF…SESFLFKPNY (234 aa). 73–80 is a binding site for GTP; it reads GSQSTGKS. Residues 659 to 688 are a coiled coil; it reads VRDKKLKRQYETVREEKEAEEEDEDEWDSE. The segment at 670-689 is disordered; that stretch reads TVREEKEAEEEDEDEWDSED. A compositionally biased stretch (acidic residues) spans 676 to 689; the sequence is EAEEEDEDEWDSED. The helical transmembrane segment at 734–754 threads the bilayer; it reads IPYYIYIVILVLGWNEFMAIL. Over 755-757 the chain is Lumenal; that stretch reads RNP. The chain crosses the membrane as a helical span at residues 758 to 778; it reads FFFTLLIMLAGATYVMYSMNL. Over 779 to 834 the chain is Cytoplasmic; the sequence is LGPASIVVQRMANEALGLAKEKLREFVVDDHMQHGHNMKKMTTNDIELDDLSEEST.

It belongs to the TRAFAC class dynamin-like GTPase superfamily. GB1/RHD3 GTPase family. RHD3 subfamily.

The protein localises to the endoplasmic reticulum membrane. Functionally, cooperates with the reticulon proteins and tubule-shaping DP1 family proteins to generate and maintain the structure of the tubular endoplasmic reticulum network. Has GTPase activity, which is required for its function in ER organization. This chain is Protein SEY1, found in Clavispora lusitaniae (strain ATCC 42720) (Yeast).